A 168-amino-acid chain; its full sequence is MNEFTHFNEQGRAKMVDISEKEASVRTAAAVSSVSMNREVHEKIKNREIGKGDVLAVAQVAGIMAAKQTSAIIPMCHPIALKGVDIAFCWEKKEQKSILHIQSNVKTKGSTGVEMEALTSASVCALTVYDMCKAADKGMVIGPTFLLEKTGGKNGDYKREKADVDMED.

Substrate is bound by residues Met75–His77 and Met115–Glu116. Asp130 is a catalytic residue.

Belongs to the MoaC family. As to quaternary structure, homohexamer; trimer of dimers.

The enzyme catalyses (8S)-3',8-cyclo-7,8-dihydroguanosine 5'-triphosphate = cyclic pyranopterin phosphate + diphosphate. It participates in cofactor biosynthesis; molybdopterin biosynthesis. Its function is as follows. Catalyzes the conversion of (8S)-3',8-cyclo-7,8-dihydroguanosine 5'-triphosphate to cyclic pyranopterin monophosphate (cPMP). The chain is Cyclic pyranopterin monophosphate synthase from Bacillus licheniformis (strain ATCC 14580 / DSM 13 / JCM 2505 / CCUG 7422 / NBRC 12200 / NCIMB 9375 / NCTC 10341 / NRRL NRS-1264 / Gibson 46).